The chain runs to 563 residues: Beta-catenin-like protein 1 (563 aa).

The residue at position 1 (M1) is an N-acetylmethionine. The segment at 1–49 (MDVGELLSYQPNRGTKRPRDDEEEEQKMRRKQTGTRERGRYREEEMTVV) is disordered. Positions 16–33 (KRPRDDEEEEQKMRRKQT) match the Nuclear localization signal motif. The segment covering 34 to 45 (GTRERGRYREEE) has biased composition (basic and acidic residues). 2 HEAT repeats span residues 79 to 129 (ESSV…VVAT) and 134 to 176 (YHLL…TLHE). Residue K91 is modified to N6-acetyllysine. The Nuclear export signal (NES) signature appears at 130 to 140 (MPDLYHLLVEL). ARM repeat units lie at residues 178-228 (EEGA…MAEF), 229-273 (RPEM…LQDN), 274-323 (DENR…CLML), 325-363 (SNRE…AMIG), and 364-417 (PEGT…LLRN). Position 389 is a phosphoserine (S389). The stretch at 476–540 (DTEEEFYLRR…HIIKEYAENI (65 aa)) forms a coiled coil. S545 carries the post-translational modification Phosphoserine.

In terms of assembly, component of the PRP19-CDC5L splicing complex composed of a core complex comprising a homotetramer of PRPF19, CDC5L, PLRG1 and BCAS2, and at least three less stably associated proteins CTNNBL1, CWC15 and HSPA8. Interacts directly with CWC15 and CDC5L in the complex. Interacts with AICDA; the interaction is important for the antibody diversification activity of AICDA. Interacts with PRPF31 (via its NLS). Interacts (via its N-terminal NLS) with KPNA1 and KPNA2. Widely expressed with highest levels in skeletal muscle, placenta, heart, spleen, testis and thyroid.

It is found in the nucleus. It localises to the cytoplasm. Functionally, component of the PRP19-CDC5L complex that forms an integral part of the spliceosome and is required for activating pre-mRNA splicing. Participates in AID/AICDA-mediated somatic hypermutation (SHM) and class-switch recombination (CSR), 2 processes resulting in the production of high-affinity, mutated isotype-switched antibodies. The polypeptide is Beta-catenin-like protein 1 (CTNNBL1) (Homo sapiens (Human)).